An 84-amino-acid polypeptide reads, in one-letter code: DNA-directed RNA polymerase subunit Rpo5 (84 aa).

This sequence belongs to the archaeal Rpo5/eukaryotic RPB5 RNA polymerase subunit family. Part of the RNA polymerase complex.

The protein resides in the cytoplasm. It catalyses the reaction RNA(n) + a ribonucleoside 5'-triphosphate = RNA(n+1) + diphosphate. In terms of biological role, DNA-dependent RNA polymerase (RNAP) catalyzes the transcription of DNA into RNA using the four ribonucleoside triphosphates as substrates. In Sulfurisphaera tokodaii (strain DSM 16993 / JCM 10545 / NBRC 100140 / 7) (Sulfolobus tokodaii), this protein is DNA-directed RNA polymerase subunit Rpo5.